A 115-amino-acid chain; its full sequence is Somatostatin-1 (115 aa).

The first 24 residues, methionine 1–alanine 24, serve as a signal peptide directing secretion. A propeptide spanning residues alanine 25 to glutamate 99 is cleaved from the precursor. A disordered region spans residues serine 60–aspartate 79. Cysteine 104 and cysteine 115 are oxidised to a cystine.

It belongs to the somatostatin family.

The protein localises to the secreted. Somatostatin inhibits the release of somatotropin. In Pelophylax ridibundus (Marsh frog), this protein is Somatostatin-1 (sst1).